A 584-amino-acid polypeptide reads, in one-letter code: 2-succinyl-5-enolpyruvyl-6-hydroxy-3-cyclohexene-1-carboxylate synthase (584 aa).

Belongs to the TPP enzyme family. MenD subfamily. Homodimer. Mg(2+) is required as a cofactor. Requires Mn(2+) as cofactor. Thiamine diphosphate serves as cofactor.

It catalyses the reaction isochorismate + 2-oxoglutarate + H(+) = 5-enolpyruvoyl-6-hydroxy-2-succinyl-cyclohex-3-ene-1-carboxylate + CO2. It functions in the pathway quinol/quinone metabolism; 1,4-dihydroxy-2-naphthoate biosynthesis; 1,4-dihydroxy-2-naphthoate from chorismate: step 2/7. The protein operates within quinol/quinone metabolism; menaquinone biosynthesis. In terms of biological role, catalyzes the thiamine diphosphate-dependent decarboxylation of 2-oxoglutarate and the subsequent addition of the resulting succinic semialdehyde-thiamine pyrophosphate anion to isochorismate to yield 2-succinyl-5-enolpyruvyl-6-hydroxy-3-cyclohexene-1-carboxylate (SEPHCHC). This Bacillus anthracis protein is 2-succinyl-5-enolpyruvyl-6-hydroxy-3-cyclohexene-1-carboxylate synthase.